A 411-amino-acid polypeptide reads, in one-letter code: Arginine deiminase (411 aa).

Cys-401 acts as the Amidino-cysteine intermediate in catalysis.

Belongs to the arginine deiminase family. Post-translationally, glycosylated.

Its subcellular location is the cytoplasm. It catalyses the reaction L-arginine + H2O = L-citrulline + NH4(+). The protein operates within amino-acid degradation; L-arginine degradation via ADI pathway; carbamoyl phosphate from L-arginine: step 1/2. This chain is Arginine deiminase, found in Streptococcus pyogenes serotype M3 (strain ATCC BAA-595 / MGAS315).